The sequence spans 339 residues: Glyceraldehyde-3-phosphate dehydrogenase (339 aa).

NAD(+)-binding positions include 12–13, D39, R84, and S127; that span reads RI. D-glyceraldehyde 3-phosphate contacts are provided by residues 157 to 159, T188, R203, 216 to 217, and R239; these read SCT and TG. Catalysis depends on C158, which acts as the Nucleophile. An NAD(+)-binding site is contributed by N320.

This sequence belongs to the glyceraldehyde-3-phosphate dehydrogenase family. Homotetramer.

The protein localises to the cytoplasm. It catalyses the reaction D-glyceraldehyde 3-phosphate + phosphate + NAD(+) = (2R)-3-phospho-glyceroyl phosphate + NADH + H(+). The protein operates within carbohydrate degradation; glycolysis; pyruvate from D-glyceraldehyde 3-phosphate: step 1/5. Functionally, catalyzes the oxidative phosphorylation of glyceraldehyde 3-phosphate (G3P) to 1,3-bisphosphoglycerate (BPG) using the cofactor NAD. The first reaction step involves the formation of a hemiacetal intermediate between G3P and a cysteine residue, and this hemiacetal intermediate is then oxidized to a thioester, with concomitant reduction of NAD to NADH. The reduced NADH is then exchanged with the second NAD, and the thioester is attacked by a nucleophilic inorganic phosphate to produce BPG. In Mycobacterium avium, this protein is Glyceraldehyde-3-phosphate dehydrogenase (gapA).